Reading from the N-terminus, the 418-residue chain is Nucleoside permease NupC (418 aa).

The next 9 helical transmembrane spans lie at 2 to 22, 34 to 54, 93 to 113, 174 to 194, 198 to 218, 264 to 284, 292 to 314, 354 to 374, and 395 to 415; these read IFSS…AWVF, IVSA…VPLG, IGGF…ASLI, IFAV…AGYA, IPLP…LLFA, LLAF…VGGF, LGLI…WSQA, AIIT…MLIG, and VLVG…FIGL.

It belongs to the concentrative nucleoside transporter (CNT) (TC 2.A.41) family.

It is found in the cell inner membrane. Involved in purine nucleosides uptake. Could also be involved in uptake of nucleobases. This Helicobacter pylori (strain ATCC 700392 / 26695) (Campylobacter pylori) protein is Nucleoside permease NupC.